Here is a 336-residue protein sequence, read N- to C-terminus: Holliday junction branch migration complex subunit RuvB (336 aa).

The segment at 1–181 is large ATPase domain (RuvB-L); the sequence is MDRIVEIEKF…FGMQFRLEFY (181 aa). ATP is bound by residues Leu20, Arg21, Gly62, Lys65, Thr66, Thr67, 128–130, Arg171, Tyr181, and Arg218; that span reads EDF. Thr66 contacts Mg(2+). A small ATPAse domain (RuvB-S) region spans residues 182–252; it reads KNEELAIILE…RAKEALDSLG (71 aa). A head domain (RuvB-H) region spans residues 255 to 336; sequence ELGFDAMDLR…KYNKGLFDEK (82 aa). DNA-binding residues include Arg309 and Arg314.

It belongs to the RuvB family. As to quaternary structure, homohexamer. Forms an RuvA(8)-RuvB(12)-Holliday junction (HJ) complex. HJ DNA is sandwiched between 2 RuvA tetramers; dsDNA enters through RuvA and exits via RuvB. An RuvB hexamer assembles on each DNA strand where it exits the tetramer. Each RuvB hexamer is contacted by two RuvA subunits (via domain III) on 2 adjacent RuvB subunits; this complex drives branch migration. In the full resolvosome a probable DNA-RuvA(4)-RuvB(12)-RuvC(2) complex forms which resolves the HJ.

It localises to the cytoplasm. It catalyses the reaction ATP + H2O = ADP + phosphate + H(+). Functionally, the RuvA-RuvB-RuvC complex processes Holliday junction (HJ) DNA during genetic recombination and DNA repair, while the RuvA-RuvB complex plays an important role in the rescue of blocked DNA replication forks via replication fork reversal (RFR). RuvA specifically binds to HJ cruciform DNA, conferring on it an open structure. The RuvB hexamer acts as an ATP-dependent pump, pulling dsDNA into and through the RuvAB complex. RuvB forms 2 homohexamers on either side of HJ DNA bound by 1 or 2 RuvA tetramers; 4 subunits per hexamer contact DNA at a time. Coordinated motions by a converter formed by DNA-disengaged RuvB subunits stimulates ATP hydrolysis and nucleotide exchange. Immobilization of the converter enables RuvB to convert the ATP-contained energy into a lever motion, pulling 2 nucleotides of DNA out of the RuvA tetramer per ATP hydrolyzed, thus driving DNA branch migration. The RuvB motors rotate together with the DNA substrate, which together with the progressing nucleotide cycle form the mechanistic basis for DNA recombination by continuous HJ branch migration. Branch migration allows RuvC to scan DNA until it finds its consensus sequence, where it cleaves and resolves cruciform DNA. In Campylobacter lari (strain RM2100 / D67 / ATCC BAA-1060), this protein is Holliday junction branch migration complex subunit RuvB.